A 335-amino-acid polypeptide reads, in one-letter code: UPF0353 protein Mvan_2751 (335 aa).

2 consecutive transmembrane segments (helical) span residues 18-38 and 67-87; these read WFFL…IVQM and LPAV…AGPT. Residues 98 to 294 form the VWFA domain; that stretch reads VVMLVIDVSQ…EQLKQVFTNL (197 aa). The chain crosses the membrane as a helical span at residues 309–329; it reads VGWLRIGSLVLALAALGALLI.

It belongs to the UPF0353 family.

The protein localises to the cell membrane. The chain is UPF0353 protein Mvan_2751 from Mycolicibacterium vanbaalenii (strain DSM 7251 / JCM 13017 / BCRC 16820 / KCTC 9966 / NRRL B-24157 / PYR-1) (Mycobacterium vanbaalenii).